The following is a 150-amino-acid chain: Transcription antitermination protein NusB (150 aa).

This sequence belongs to the NusB family.

Its function is as follows. Involved in transcription antitermination. Required for transcription of ribosomal RNA (rRNA) genes. Binds specifically to the boxA antiterminator sequence of the ribosomal RNA (rrn) operons. The sequence is that of Transcription antitermination protein NusB from Saccharophagus degradans (strain 2-40 / ATCC 43961 / DSM 17024).